The chain runs to 269 residues: C-type lectin domain family 2 member G (269 aa).

At 1-107 (MNITRASLPM…SPESSAKLYC (107 aa)) the chain is on the cytoplasmic side. A helical; Signal-anchor for type II membrane protein membrane pass occupies residues 108 to 128 (CCGVIMVLTVAVVALSVALPA). Residues 129-269 (TKTEQILINK…SLHCPTPVPV (141 aa)) lie on the Extracellular side of the membrane. The C-type lectin domain occupies 150 to 254 (VGNKCFYFSE…HYIPRIWICS (105 aa)). Asn-163 carries an N-linked (GlcNAc...) asparagine glycan. A disulfide bridge links Cys-171 with Cys-253.

In terms of tissue distribution, detected in vagina, eye, tongue, stomach and spleen.

It is found in the cell membrane. Its function is as follows. Inhibits osteoclast formation. The chain is C-type lectin domain family 2 member G (Clec2g) from Mus musculus (Mouse).